The following is a 110-amino-acid chain: Large ribosomal subunit protein uL22 (110 aa).

Belongs to the universal ribosomal protein uL22 family. Part of the 50S ribosomal subunit.

Its function is as follows. This protein binds specifically to 23S rRNA; its binding is stimulated by other ribosomal proteins, e.g. L4, L17, and L20. It is important during the early stages of 50S assembly. It makes multiple contacts with different domains of the 23S rRNA in the assembled 50S subunit and ribosome. The globular domain of the protein is located near the polypeptide exit tunnel on the outside of the subunit, while an extended beta-hairpin is found that lines the wall of the exit tunnel in the center of the 70S ribosome. The sequence is that of Large ribosomal subunit protein uL22 from Pseudomonas aeruginosa (strain LESB58).